The sequence spans 136 residues: Regulator of nucleoside diphosphate kinase (136 aa).

This sequence belongs to the Rnk family. Interacts with the RNA polymerase.

Its function is as follows. May act as an anti-Gre factor. In Escherichia coli O6:H1 (strain CFT073 / ATCC 700928 / UPEC), this protein is Regulator of nucleoside diphosphate kinase.